An 804-amino-acid polypeptide reads, in one-letter code: RasGAP-activating-like protein 1 (804 aa).

C2 domains follow at residues 1 to 105 (MAKS…DSWI) and 116 to 231 (VQGE…KGWF). Positions 21, 27, 74, 76, 82, 149, 155, 202, 204, and 210 each coordinate Ca(2+). The Ras-GAP domain maps to 317–545 (GLAGRFLDYL…SRVRDFLDRL (229 aa)). The PH domain occupies 565–672 (AIVREGYLLK…WLSALRKASA (108 aa)). The segment at 674–710 (NPNKLAACHPGAFRSARWTCCLQAERSAAGCSRTHSA) adopts a Btk-type zinc-finger fold. The Zn(2+) site is built by His682, Cys693, Cys694, and Cys704.

Ca(2+) is required as a cofactor. Highly expressed in thyroid and adrenal medulla, lower expression in brain, spinal cord and trachea. Expressed in melanocytes.

Functionally, probable inhibitory regulator of the Ras-cyclic AMP pathway. Plays a role in dendrite formation by melanocytes. The polypeptide is RasGAP-activating-like protein 1 (Homo sapiens (Human)).